A 77-amino-acid polypeptide reads, in one-letter code: Acyl carrier protein (77 aa).

The 76-residue stretch at Met-1 to Glu-76 folds into the Carrier domain. An O-(pantetheine 4'-phosphoryl)serine modification is found at Ser-36.

It belongs to the acyl carrier protein (ACP) family. Post-translationally, 4'-phosphopantetheine is transferred from CoA to a specific serine of apo-ACP by AcpS. This modification is essential for activity because fatty acids are bound in thioester linkage to the sulfhydryl of the prosthetic group.

It localises to the cytoplasm. Its pathway is lipid metabolism; fatty acid biosynthesis. Its function is as follows. Carrier of the growing fatty acid chain in fatty acid biosynthesis. The sequence is that of Acyl carrier protein from Staphylococcus epidermidis (strain ATCC 12228 / FDA PCI 1200).